Consider the following 1063-residue polypeptide: MFERIISFAIQQRWLVLLAVFGMAGLGIFSYNRLPIDAVPDITNVQVQVNTSAPGYSPLETEQRVTYPIEVVMAGLPGLEQTRSLSRYGLSQVTVIFKDGTDVYFARQLVNQRIQEAKDNLPEGVVPAMGPISTGLGEIYLWTVEAEEGARKADGTAYTPTDLREIQDWVVRPQLRNVPGVTEINTIGGFNKQYLVAPSLERLASYGLTLTDVVNALNKNNDNVGAGYIERRGEQYLVRAPGQVASEDDIRNIIVGTAQGQPIRIRDIGDVEIGKELRTGAATENGKEVVLGTVFMLIGENSRAVSKAVDEKVASINRTMPEGVKIVTVYDRTRLVDKAIATVKKNLLEGAVLVIVILFLFLGNIRAALITATIIPLAMLFTFTGMVNYKISANLMSLGALDFGIIIDGAVVIVENCVRRLAHAQEHHGRPLTRSERFHEVFAAAKEARRPLIFGQLIIMIVYLPIFALTGVEGKMFHPMAFTVVLALLGAMILSVTFVPAAVALFIGERVAEKENRLMLWAKRRYEPLLEKSLANTAVVLTFAAVSIVLCVAIAARLGSEFIPNLNEGDIAIQALRIPGTSLSQSVEMQKTIETTLKAKFPEIERVFARTGTAEIASDPMPPNISDGYIMLKPEKDWPEPKKTHAELLSAIQEEAGKIPGNNYEFSQPIQLRFNELISGVRSDVAVKIFGDDNNVLSETAKKVSAVLQGIPGAQEVKVEQTTGLPMLTVKIDREKAARYGLNMSDVQDAVATGVGGRDSGTFFQGDRRFDIVVRLPEAVRGEVEALRRLPIPLPKGVDARTTFIPLSEVATLEMAPGPNQISRENGKRRIVISANVRGRDIGSFVPEAEAAIQSQVKIPAGYWMTWGGTFEQLQSATTRLQVVVPVALLLVFVLLFAMFNNIKDGLLVFTGIPFALTGGILALWIRGIPMSITAAVGFIALCGVAVLNGLVMLSFIRSLREEGHSLDSAVRVGALTRLRPVLMTALVASLGFVPMAIATGTGAEVQRPLATVVIGGILSSTALTLLVLPVLYRLAHRKDEDAEDTREPVTQTHQPDQGRQPA.

10 helical membrane-spanning segments follow: residues 14-29, 350-370, 452-472, 487-507, 534-554, 883-903, 906-926, 937-957, 982-1004, and 1013-1033; these read WLVL…LGIF, GAVL…AALI, LIFG…LTGV, ALLG…ALFI, LANT…CVAI, VVVP…FNNI, GLLV…ALWI, VGFI…LSFI, VLMT…GTGA, and VVIG…PVLY. Residues 1040-1063 form a disordered region; that stretch reads DEDAEDTREPVTQTHQPDQGRQPA. A compositionally biased stretch (polar residues) spans 1049 to 1063; sequence PVTQTHQPDQGRQPA.

This sequence belongs to the resistance-nodulation-cell division (RND) (TC 2.A.6) family.

The protein localises to the cell membrane. Functionally, has a low cation transport activity for cobalt, it is essential for the expression of cobalt, zinc, and cadmium resistance. CzcA and CzcB together would act in zinc efflux nearly as effectively as the complete CZC efflux system (CzcABC). This is Cation efflux system protein CzcA (czcA) from Alcaligenes sp. (strain CT14).